The following is a 211-amino-acid chain: Urease accessory protein UreF (211 aa).

A disordered region spans residues leucine 68–glutamine 93.

This sequence belongs to the UreF family. As to quaternary structure, ureD, UreF and UreG form a complex that acts as a GTP-hydrolysis-dependent molecular chaperone, activating the urease apoprotein by helping to assemble the nickel containing metallocenter of UreC. The UreE protein probably delivers the nickel.

It is found in the cytoplasm. In terms of biological role, required for maturation of urease via the functional incorporation of the urease nickel metallocenter. This chain is Urease accessory protein UreF, found in Mycobacterium marinum (strain ATCC BAA-535 / M).